We begin with the raw amino-acid sequence, 78 residues long: Large ribosomal subunit protein bL28 (78 aa).

A disordered region spans residues 1–20 (MSRVCQVTGKGPVTGNNISH).

This sequence belongs to the bacterial ribosomal protein bL28 family.

In Pseudomonas fluorescens (strain ATCC BAA-477 / NRRL B-23932 / Pf-5), this protein is Large ribosomal subunit protein bL28.